The following is a 148-amino-acid chain: Antigen GM6 (148 aa).

The tract at residues 1–22 (KLKASDSRSFLDPMPEGVPLSE) is disordered. 2 tandem repeats follow at residues 1-68 (KLKA…HELA) and 69-136 (KLKA…HELA). The stretch at 137-148 (KLKASDSRSFQS) is one 3; truncated repeat.

It is found in the cytoplasm. It localises to the cytoskeleton. The sequence is that of Antigen GM6 (GM6) from Trypanosoma brucei gambiense.